The sequence spans 498 residues: Putative antiporter subunit mnhD2 (498 aa).

Helical transmembrane passes span 2-22 (LSNL…ILVF), 32-52 (YLYL…LIYV), 78-98 (LSLI…AYGF), 108-128 (YHLP…FLTS), 130-150 (LFNL…LITL), 161-181 (IIYV…IGLL), 209-229 (ISLI…FMWL), 240-260 (LAAL…IRFF), 271-291 (IHPL…IGVI), 308-328 (IGFI…GAIF), 330-350 (LVND…LVYI), 369-389 (FGVA…FSGF), 406-426 (IGLA…FRIF), and 451-471 (ILSI…VVLN).

Belongs to the CPA3 antiporters (TC 2.A.63) subunit D family. In terms of assembly, may form a heterooligomeric complex that consists of seven subunits: mnhA2, mnhB2, mnhC2, mnhD2, mnhE2, mnhF2 and mnhG2.

The protein resides in the cell membrane. This chain is Putative antiporter subunit mnhD2 (mnhD2), found in Staphylococcus aureus (strain Mu3 / ATCC 700698).